The following is a 545-amino-acid chain: Threonine--tRNA ligase catalytic subunit (545 aa).

The segment at 139 to 433 is catalytic; sequence DHRLIGEKLD…LLEHFKGKLP (295 aa). Zn(2+) is bound by residues cysteine 231, histidine 282, and histidine 410.

The protein belongs to the class-II aminoacyl-tRNA synthetase family. As to quaternary structure, homodimer. Probably interacts with its editing subunit. Zn(2+) is required as a cofactor.

It is found in the cytoplasm. The enzyme catalyses tRNA(Thr) + L-threonine + ATP = L-threonyl-tRNA(Thr) + AMP + diphosphate + H(+). In terms of biological role, catalyzes the attachment of threonine to tRNA(Thr) in a two-step reaction: L-threonine is first activated by ATP to form Thr-AMP and then transferred to the acceptor end of tRNA(Thr). Also activates L-serine and transfers it to tRNA(Thr) but cannot deacylate incorrectly charged amino acid; unlike most archaea the editing function is found in a freestanding protein. The sequence is that of Threonine--tRNA ligase catalytic subunit from Saccharolobus islandicus (strain Y.G.57.14 / Yellowstone #1) (Sulfolobus islandicus).